The chain runs to 200 residues: Small ribosomal subunit protein uS4 (200 aa).

Residues 92-155 (SRLDAVVYSL…QKLNVIVESV (64 aa)) enclose the S4 RNA-binding domain.

The protein belongs to the universal ribosomal protein uS4 family. As to quaternary structure, part of the 30S ribosomal subunit. Contacts protein S5. The interaction surface between S4 and S5 is involved in control of translational fidelity.

Its function is as follows. One of the primary rRNA binding proteins, it binds directly to 16S rRNA where it nucleates assembly of the body of the 30S subunit. Functionally, with S5 and S12 plays an important role in translational accuracy. This chain is Small ribosomal subunit protein uS4, found in Staphylococcus aureus (strain MRSA252).